Reading from the N-terminus, the 199-residue chain is Probable GTP-binding protein EngB (199 aa).

Residues D28–V199 form the EngB-type G domain. Residues G36 to S43, G63 to L67, D81 to G84, T148 to D151, and F180 to S182 contribute to the GTP site. Residues S43 and T65 each contribute to the Mg(2+) site.

This sequence belongs to the TRAFAC class TrmE-Era-EngA-EngB-Septin-like GTPase superfamily. EngB GTPase family. Requires Mg(2+) as cofactor.

Its function is as follows. Necessary for normal cell division and for the maintenance of normal septation. The protein is Probable GTP-binding protein EngB of Streptococcus pyogenes serotype M49 (strain NZ131).